A 285-amino-acid chain; its full sequence is uncharacterized protein (285 aa).

Residues 197 to 217 (PTIGALLSLVSAFFSFIPFLM) form a helical membrane-spanning segment.

The protein localises to the membrane. This is an uncharacterized protein from Saccharomyces cerevisiae (strain ATCC 204508 / S288c) (Baker's yeast).